The primary structure comprises 122 residues: Ribosome-binding factor A (122 aa).

The protein belongs to the RbfA family. In terms of assembly, monomer. Binds 30S ribosomal subunits, but not 50S ribosomal subunits or 70S ribosomes.

It localises to the cytoplasm. Its function is as follows. One of several proteins that assist in the late maturation steps of the functional core of the 30S ribosomal subunit. Associates with free 30S ribosomal subunits (but not with 30S subunits that are part of 70S ribosomes or polysomes). Required for efficient processing of 16S rRNA. May interact with the 5'-terminal helix region of 16S rRNA. The chain is Ribosome-binding factor A from Pelobacter propionicus (strain DSM 2379 / NBRC 103807 / OttBd1).